The primary structure comprises 266 residues: Tryptophan synthase alpha chain (266 aa).

Catalysis depends on proton acceptor residues E49 and D60.

This sequence belongs to the TrpA family. As to quaternary structure, tetramer of two alpha and two beta chains.

It catalyses the reaction (1S,2R)-1-C-(indol-3-yl)glycerol 3-phosphate + L-serine = D-glyceraldehyde 3-phosphate + L-tryptophan + H2O. It functions in the pathway amino-acid biosynthesis; L-tryptophan biosynthesis; L-tryptophan from chorismate: step 5/5. Functionally, the alpha subunit is responsible for the aldol cleavage of indoleglycerol phosphate to indole and glyceraldehyde 3-phosphate. This Trichormus variabilis (strain ATCC 29413 / PCC 7937) (Anabaena variabilis) protein is Tryptophan synthase alpha chain.